We begin with the raw amino-acid sequence, 290 residues long: Bifunctional protein FolD 1 (290 aa).

NADP(+) is bound by residues 164–166 (GRS), I193, and I236.

The protein belongs to the tetrahydrofolate dehydrogenase/cyclohydrolase family. In terms of assembly, homodimer.

It carries out the reaction (6R)-5,10-methylene-5,6,7,8-tetrahydrofolate + NADP(+) = (6R)-5,10-methenyltetrahydrofolate + NADPH. It catalyses the reaction (6R)-5,10-methenyltetrahydrofolate + H2O = (6R)-10-formyltetrahydrofolate + H(+). It participates in one-carbon metabolism; tetrahydrofolate interconversion. Catalyzes the oxidation of 5,10-methylenetetrahydrofolate to 5,10-methenyltetrahydrofolate and then the hydrolysis of 5,10-methenyltetrahydrofolate to 10-formyltetrahydrofolate. The protein is Bifunctional protein FolD 1 of Geobacter metallireducens (strain ATCC 53774 / DSM 7210 / GS-15).